The sequence spans 205 residues: Imidazole glycerol phosphate synthase subunit HisH (205 aa).

The Glutamine amidotransferase type-1 domain maps to Met1–Gly205. The active-site Nucleophile is the Cys79. Residues His186 and Glu188 contribute to the active site.

In terms of assembly, heterodimer of HisH and HisF.

It is found in the cytoplasm. It carries out the reaction 5-[(5-phospho-1-deoxy-D-ribulos-1-ylimino)methylamino]-1-(5-phospho-beta-D-ribosyl)imidazole-4-carboxamide + L-glutamine = D-erythro-1-(imidazol-4-yl)glycerol 3-phosphate + 5-amino-1-(5-phospho-beta-D-ribosyl)imidazole-4-carboxamide + L-glutamate + H(+). The catalysed reaction is L-glutamine + H2O = L-glutamate + NH4(+). It functions in the pathway amino-acid biosynthesis; L-histidine biosynthesis; L-histidine from 5-phospho-alpha-D-ribose 1-diphosphate: step 5/9. Functionally, IGPS catalyzes the conversion of PRFAR and glutamine to IGP, AICAR and glutamate. The HisH subunit catalyzes the hydrolysis of glutamine to glutamate and ammonia as part of the synthesis of IGP and AICAR. The resulting ammonia molecule is channeled to the active site of HisF. This chain is Imidazole glycerol phosphate synthase subunit HisH, found in Wolinella succinogenes (strain ATCC 29543 / DSM 1740 / CCUG 13145 / JCM 31913 / LMG 7466 / NCTC 11488 / FDC 602W) (Vibrio succinogenes).